The chain runs to 211 residues: tRNA (guanine-N(7)-)-methyltransferase (211 aa).

Positions 37, 62, 89, and 112 each coordinate S-adenosyl-L-methionine. Asp-112 is a catalytic residue. Substrate contacts are provided by Lys-116 and Asp-148.

It belongs to the class I-like SAM-binding methyltransferase superfamily. TrmB family.

It catalyses the reaction guanosine(46) in tRNA + S-adenosyl-L-methionine = N(7)-methylguanosine(46) in tRNA + S-adenosyl-L-homocysteine. The protein operates within tRNA modification; N(7)-methylguanine-tRNA biosynthesis. Catalyzes the formation of N(7)-methylguanine at position 46 (m7G46) in tRNA. This is tRNA (guanine-N(7)-)-methyltransferase from Geobacter metallireducens (strain ATCC 53774 / DSM 7210 / GS-15).